The following is an 809-amino-acid chain: TPR repeat-containing protein TP_0920 (809 aa).

A disordered region spans residues 103 to 125; the sequence is PGEARALPNSEQPEVPASLDSTS. TPR repeat units lie at residues 315–348, 383–416, 418–450, 471–504, 513–550, 552–582, 583–616, 656–689, and 723–756; these read LREY…DPHC, AFLS…DPHQ, LFAL…FLAQ, TEVR…GSAD, LLLR…APDC, LYHF…DPDN, GWLH…LPHE, GQAF…EPQN, and AHVY…WPQC.

The protein is TPR repeat-containing protein TP_0920 of Treponema pallidum (strain Nichols).